The sequence spans 140 residues: Sex-regulated protein janus-B (140 aa).

Arg42 serves as a coordination point for substrate. His69 functions as the Proton acceptor in the catalytic mechanism. Residue 110–112 (SRT) coordinates substrate.

The protein belongs to the janus family. Germline cells of adult males.

JanA and janB regulate somatic sex differentiation. The sequence is that of Sex-regulated protein janus-B (janB) from Drosophila melanogaster (Fruit fly).